Here is a 125-residue protein sequence, read N- to C-terminus: Small ribosomal subunit protein uS12m (125 aa).

Belongs to the universal ribosomal protein uS12 family.

The protein localises to the mitochondrion. Protein S12 is involved in the translation initiation step. In Brassica napus (Rape), this protein is Small ribosomal subunit protein uS12m (RPS12).